A 446-amino-acid chain; its full sequence is Phosphoglucosamine mutase (446 aa).

Residue Ser103 is the Phosphoserine intermediate of the active site. Mg(2+)-binding residues include Ser103, Asp242, Asp244, and Asp246. The residue at position 103 (Ser103) is a Phosphoserine.

The protein belongs to the phosphohexose mutase family. It depends on Mg(2+) as a cofactor. In terms of processing, activated by phosphorylation.

The catalysed reaction is alpha-D-glucosamine 1-phosphate = D-glucosamine 6-phosphate. In terms of biological role, catalyzes the conversion of glucosamine-6-phosphate to glucosamine-1-phosphate. This is Phosphoglucosamine mutase from Vibrio vulnificus (strain YJ016).